The sequence spans 212 residues: Adenylate kinase (212 aa).

10–15 is an ATP binding site; that stretch reads GAGKGT. Positions 30–59 are NMP; the sequence is STGDMFRAAMANQTEMGRLAKSYIDKGELV. AMP contacts are provided by residues Thr31, Arg36, 57–59, 86–89, and Gln93; these read ELV and GYPR. An LID region spans residues 127–159; the sequence is GRIINRKTGETFHKVFNPPVDYKEEDYYQREDD. ATP is bound by residues Arg128 and 137-138; that span reads TF. AMP is bound by residues Arg156 and Arg167. Gln195 lines the ATP pocket.

Belongs to the adenylate kinase family. As to quaternary structure, monomer.

It is found in the cytoplasm. The catalysed reaction is AMP + ATP = 2 ADP. The protein operates within purine metabolism; AMP biosynthesis via salvage pathway; AMP from ADP: step 1/1. Catalyzes the reversible transfer of the terminal phosphate group between ATP and AMP. Plays an important role in cellular energy homeostasis and in adenine nucleotide metabolism. The sequence is that of Adenylate kinase from Streptococcus pyogenes serotype M12 (strain MGAS2096).